The chain runs to 520 residues: MIFLLTLAGLKVLSIVILFGIIYLFASSIYNLYFHPLSRFPGPFLARAQDFWVSRQWISGNWPWEVEALHAKYGDIVRIGPNELSCAHPQSIKDIYGQPNINHPQFFRKFTTFYKQTDVGGSIGTEVDPHIHQGIRKRLAPGFSVSALSKQSDIVIRHIDSLLHQVSRNGQCQSGMNMSQWFMWLAFDVIVDLSFGEELGTVETGTGNDWINMLANSGFQIALGYVVRRRWKALQDLVRYCLVNEKSKSMRTKYIANAREKARQRLERGADVERFDFFSHLLREKAPEANIDFFASQGTTLVAAGTETTSTFMSALTYYLLQNPRALDRLQEELRRSFKHHSEIDGESTKSLKYLNAAIEEGMRIFAPAPFGLPRVSPGAMVSGEWIPKGSIIATAAHVTSRDERWFFKSKEFHPERWLPLDHPHYDHIFSKDRKDASKPFSIGSRSCIGIHLSYMEVRICVSKLAWSFDWEQVSAHEDFVKDARLLGLWKAAPFHVRYQPYPGAEPPVMNHSKINSDLA.

A helical membrane pass occupies residues 2-22 (IFLLTLAGLKVLSIVILFGII). N-linked (GlcNAc...) asparagine glycosylation occurs at N177. Position 448 (C448) interacts with heme. A glycan (N-linked (GlcNAc...) asparagine) is linked at N511.

Belongs to the cytochrome P450 family. Requires heme as cofactor.

The protein resides in the membrane. Its pathway is secondary metabolite biosynthesis; terpenoid biosynthesis. Cytochrome P4590 monooxygenase part of the gene cluster that mediates the biosynthesis of betaestacins. The bifunctional terpene synthase btcA converts isopentenyl diphosphate (IPP) and dimethylallyl diphosphate (DMAPP) into the sesterterpene betaestacin I. The C-terminal prenyltransferase (PT) domain of btcA catalyzes formation of GFPP, whereas the N-terminal terpene cyclase (TC) domain catalyzes the cyclization of GFPP into betaestacin I. The cytochrome P450 monooxygenase btcB oxidizes the C25 methyl group of betaestacin I to yield the carboxylic acid betaestacin IV via the alcohol betaestacin III. The cytochrome P450 monooxygenase btcC further catalyzes the multistep oxidation of betaestacin IV to produce several compounds, including betaestacins Va, Vb, Vc and VI. The sequence is that of Cytochrome P450 monooxygenase btcC from Colletotrichum orbiculare (strain 104-T / ATCC 96160 / CBS 514.97 / LARS 414 / MAFF 240422) (Cucumber anthracnose fungus).